Reading from the N-terminus, the 341-residue chain is General L-amino acid-binding periplasmic protein AapJ (341 aa).

The signal sequence occupies residues 1–23 (MKNKLLSAAIGAAVLAVGASAAS).

It belongs to the bacterial solute-binding protein 3 family. As to quaternary structure, the complex is composed of two ATP-binding proteins (AapP), two transmembrane proteins (AapM and AapQ) and a solute-binding protein (AapJ).

The protein resides in the periplasm. Its function is as follows. Part of the ABC transporter complex AapJQMP involved in uptake of L-amino acids. Affects the efflux of these amino acids as well. Essential for the development of bacteroids, the differentiated legume-symbiotic forms of this bacterium, and for the effective N(2) fixation by them. The sequence is that of General L-amino acid-binding periplasmic protein AapJ (aapJ) from Rhizobium johnstonii (strain DSM 114642 / LMG 32736 / 3841) (Rhizobium leguminosarum bv. viciae).